The sequence spans 295 residues: MRPEIAVLDIQGQYRVYTGFYRADAAENTIILINGSLATTASFAQTVRNLHPQFNVVLFDQPYAGKSKPHNRQERFISKETEAHILLELIEHFQADHVMSFSWGGASTLLALAHQPRGVKKAVVSSFSPVINEPMRDYLDRGCQYLAACDRYQVGNLVNDTIGKHLPSLFKRFNYRHVSSLDSHEYAQMHFHINEVLQHDLERALDGARNIDIPVLFINGDRDEYTTVEDARQFSKHVGRSHFSVIRDAGHFLDMENKTACEDTRSVMLGFLKPTMREPRHRYQPVKQGQHALAI.

The region spanning 28 to 254 (NTIILINGSL…VIRDAGHFLD (227 aa)) is the AB hydrolase-1 domain.

The protein operates within polyester biosynthesis; polyhydroxyalkanoate biosynthesis. Catalyzes the transfer of the acyl moiety from in vitro synthesized 3-hydroxydecanoyl-CoA to acyl carrier protein. This is (R)-3-hydroxydecanoyl-ACP:CoA transacylase (phaG) from Ectopseudomonas oleovorans (Pseudomonas oleovorans).